Consider the following 309-residue polypeptide: Glutaminase (309 aa).

Residues Ser65, Asn117, Glu162, Asn169, Tyr193, Tyr245, and Val263 each contribute to the substrate site.

Belongs to the glutaminase family. In terms of assembly, homotetramer.

It catalyses the reaction L-glutamine + H2O = L-glutamate + NH4(+). The chain is Glutaminase from Geobacillus thermodenitrificans (strain NG80-2).